The chain runs to 246 residues: Probable transcriptional regulatory protein CA_C2295 (246 aa).

Belongs to the TACO1 family.

It is found in the cytoplasm. This is Probable transcriptional regulatory protein CA_C2295 from Clostridium acetobutylicum (strain ATCC 824 / DSM 792 / JCM 1419 / IAM 19013 / LMG 5710 / NBRC 13948 / NRRL B-527 / VKM B-1787 / 2291 / W).